A 1236-amino-acid polypeptide reads, in one-letter code: ATP-dependent helicase/nuclease subunit A (1236 aa).

Positions 2-457 (AHWTIEQEEA…VDLNKNFRSH (456 aa)) constitute a UvrD-like helicase ATP-binding domain. ATP is bound at residue 23-30 (AAAGSGKT). The 302-residue stretch at 515–816 (NTAKRVEICI…RIMSIHKSKG (302 aa)) folds into the UvrD-like helicase C-terminal domain.

The protein belongs to the helicase family. AddA subfamily. As to quaternary structure, heterodimer of AddA and AddB/RexB. It depends on Mg(2+) as a cofactor.

It catalyses the reaction Couples ATP hydrolysis with the unwinding of duplex DNA by translocating in the 3'-5' direction.. It carries out the reaction ATP + H2O = ADP + phosphate + H(+). Functionally, the heterodimer acts as both an ATP-dependent DNA helicase and an ATP-dependent, dual-direction single-stranded exonuclease. Recognizes the chi site generating a DNA molecule suitable for the initiation of homologous recombination. The AddA nuclease domain is required for chi fragment generation; this subunit has the helicase and 3' -&gt; 5' nuclease activities. This is ATP-dependent helicase/nuclease subunit A from Syntrophomonas wolfei subsp. wolfei (strain DSM 2245B / Goettingen).